The sequence spans 95 residues: UPF0358 protein BCG9842_B1188 (95 aa).

Belongs to the UPF0358 family.

This chain is UPF0358 protein BCG9842_B1188, found in Bacillus cereus (strain G9842).